The primary structure comprises 87 residues: ADLANGAKVFSGNCAACHMGGGNVVMANKTLKKEALEQFGMYSEDAIIYQVQHGKNAMPAFAGRLTDEQIQDVAAYVLDQAAKGWAG.

Residues C14, C17, H18, and M58 each contribute to the heme c site.

It belongs to the cytochrome c family. PetJ subfamily. Monomer. In terms of processing, binds 1 heme c group covalently per subunit.

It localises to the cellular thylakoid lumen. Functions as an electron carrier between membrane-bound cytochrome b6-f and photosystem I in oxygenic photosynthesis. The polypeptide is Cytochrome c6 (petJ) (Synechococcus elongatus).